Consider the following 432-residue polypeptide: Fibroleukin (432 aa).

Residues 1–19 (MRLPGWLWLSSAVLAACRA) form the signal peptide. A glycan (N-linked (GlcNAc...) asparagine) is linked at Asn24. A coiled-coil region spans residues 71–157 (GSMEEVLKEV…QGRLETLHLV (87 aa)). A disordered region spans residues 100–122 (QADDHRDPGGNGGNGAETAEDSR). Asn172, Asn228, Asn256, and Asn329 each carry an N-linked (GlcNAc...) asparagine glycan. The 233-residue stretch at 197-429 (PVQHLIYKDC…QAKMMIRPKN (233 aa)) folds into the Fibrinogen C-terminal domain. Cys206 and Cys235 are oxidised to a cystine. Cys364 and Cys377 form a disulfide bridge.

In terms of assembly, homotetramer; disulfide-linked. In terms of tissue distribution, constitutively expressed in cytotoxic T-cells.

It localises to the secreted. Converts prothrombin to thrombin. This chain is Fibroleukin (Fgl2), found in Mus musculus (Mouse).